The sequence spans 196 residues: Prefoldin subunit 3 (196 aa).

Residue alanine 2 is modified to N-acetylalanine. Lysine 58 is subject to N6-acetyllysine.

This sequence belongs to the prefoldin subunit alpha family. In terms of assembly, heterohexamer of two PFD-alpha type and four PFD-beta type subunits. Binds to the C-terminal part of VHL.

It localises to the cytoplasm. The protein resides in the nucleus. In terms of biological role, binds specifically to cytosolic chaperonin (c-CPN) and transfers target proteins to it. Binds to nascent polypeptide chain and promotes folding in an environment in which there are many competing pathways for nonnative proteins. In Mus musculus (Mouse), this protein is Prefoldin subunit 3 (Vbp1).